A 231-amino-acid polypeptide reads, in one-letter code: Putative cobalt transport protein CbiM 1 (231 aa).

The next 6 membrane-spanning stretches (helical) occupy residues 8 to 28 (LPLQWCLFWFAVSAPFIAYGI), 41 to 61 (TLPLLAVCGAFIFVLSSLKMP), 74 to 94 (GLGAIMFGPFITSVLSIIVLV), 97 to 117 (ALFLAHGGLTTLGANVFSMGI), 138 to 158 (IVNVFLASALADIFTYVITSI), and 175 to 195 (FITFAGIFAVTQVPLAIIEGI).

Belongs to the CbiM family. In terms of assembly, forms an energy-coupling factor (ECF) transporter complex composed of an ATP-binding protein (A component, CbiO), a transmembrane protein (T component, CbiQ) and 2 possible substrate-capture proteins (S components, CbiM and CbiN) of unknown stoichimetry.

The protein localises to the cell membrane. The protein operates within cofactor biosynthesis; adenosylcobalamin biosynthesis. Its function is as follows. Part of the energy-coupling factor (ECF) transporter complex CbiMNOQ involved in cobalt import. The sequence is that of Putative cobalt transport protein CbiM 1 from Methanosphaerula palustris (strain ATCC BAA-1556 / DSM 19958 / E1-9c).